The sequence spans 205 residues: Non-structural protein NS3 (205 aa).

Residues 177 to 205 form a disordered region; that stretch reads GTRSPETGCRKVTSGLPHGASGGSGTRQG. Residues 196 to 205 show a composition bias toward gly residues; sequence ASGGSGTRQG.

Belongs to the orbivirus NS3 family.

Its function is as follows. May play a role in the release of virions from infected cells. This is Non-structural protein NS3 (Segment-10) from Broadhaven virus (BRD).